Here is a 243-residue protein sequence, read N- to C-terminus: Asnovolin H synthase nvfL (243 aa).

7 consecutive transmembrane segments (helical) span residues 20 to 42, 51 to 71, 75 to 95, 112 to 132, 138 to 160, 169 to 189, and 205 to 225; these read ANTLRIMCAISWNISYMSMAYYS, ALIPLCNNIAWEFVYSFIHCP, FVRIENTGWFLLNIVVMYAAI, LPFIFAVGISAMIAGHLALAA, IAFVWSAKGCQLVLSTGALSQLL, SYVVWLSRYLGTVFIDVMVTI, and LLLWFMAVFHLLDWTYGFCFY.

It belongs to the paxB family.

It localises to the membrane. It carries out the reaction (3R)-[(10S)-11-epoxyfarnesyl]-2,3,5-trimethyl-6-oxido-4-oxocyclohexa-1,5-diene-1-carboxylate + H(+) = asnovolin H. It participates in secondary metabolite biosynthesis; terpenoid biosynthesis. Terpene cyclase; part of the gene cluster that mediates the biosynthesis of novofumigatonin, a heavily oxygenated meroterpenoid containing a unique orthoester moiety. The first step of the pathway is the synthesis of 3,5-dimethylorsellinic acid (DMOA) by the polyketide synthase nvfA via condensation of one acetyl-CoA starter unit with 3 malonyl-CoA units and 2 methylations. DMOA is then converted to farnesyl-DMOA by the farnesyltransferase nvfB. Epoxydation by FAD-dependent monooxygenase nvfK, followed by a protonation-initiated cyclization catalyzed by the terpene cyclase nvfL leads to the production of asnavolin H. The short chain dehydrogenase nvfC then as a 3-OH dehydrogenase of asnovolin H to yield chemesin D. There are two branches to synthesize asnovolin A from chemesin D. In one branch, chemesin D undergoes Baeyer-Villiger oxidation by nvfH, methylation by nvfJ, and enoyl reduction by the nvfM D enoylreductase that reduces the double bond between C-5'and C-6', to form respectively asnovolin I, asnovolin K, and asnovolin A. In the other branch, the methylation precedes the Baeyer-Villiger oxidation and the enoyl reduction to yield asnovolin A via the asnovolin J intermediate. Asnovolin A is further converted to fumigatonoid A by the Fe(II)/2-oxoglutarate-dependent dioxygenase nvfI that catalyzes an endoperoxidation reaction. The alpha/beta hydrolase nvfD then acts as an epimerase that converts fumigatonoid A to its C-5' epimer, which then undergoes spontaneous or nvfD-catalyzed lactonization. The following step utilizes the ketoreductase nvfG to produce fumigatonoid B. The dioxygenase nvfE further converts fumigatonoid B into fumigatonoid C. Finally the Fe(II)/2-oxoglutarate-dependent dioxygenase nvfF catalyzes two rounds of oxidation to transform fumigatonoid C into the end product, novofumigatonin A. In Aspergillus novofumigatus (strain IBT 16806), this protein is Asnovolin H synthase nvfL.